The sequence spans 310 residues: HPr kinase/phosphorylase (310 aa).

Active-site residues include histidine 138 and lysine 159. 153–160 (GDSGIGKS) serves as a coordination point for ATP. Position 160 (serine 160) interacts with Mg(2+). Aspartate 177 acts as the Proton acceptor; for phosphorylation activity. Proton donor; for dephosphorylation activity in catalysis. The tract at residues 201-210 (LEIRGVGIID) is important for the catalytic mechanism of both phosphorylation and dephosphorylation. Glutamate 202 serves as a coordination point for Mg(2+). Residue arginine 243 is part of the active site. The interval 264 to 269 (PVKTGR) is important for the catalytic mechanism of dephosphorylation.

This sequence belongs to the HPrK/P family. Homohexamer. Requires Mg(2+) as cofactor.

The catalysed reaction is [HPr protein]-L-serine + ATP = [HPr protein]-O-phospho-L-serine + ADP + H(+). It carries out the reaction [HPr protein]-O-phospho-L-serine + phosphate + H(+) = [HPr protein]-L-serine + diphosphate. In terms of biological role, catalyzes the ATP- as well as the pyrophosphate-dependent phosphorylation of a specific serine residue in HPr, a phosphocarrier protein of the phosphoenolpyruvate-dependent sugar phosphotransferase system (PTS). HprK/P also catalyzes the pyrophosphate-producing, inorganic phosphate-dependent dephosphorylation (phosphorolysis) of seryl-phosphorylated HPr (P-Ser-HPr). The two antagonistic activities of HprK/P are regulated by several intracellular metabolites, which change their concentration in response to the absence or presence of rapidly metabolisable carbon sources (glucose, fructose, etc.) in the growth medium. Therefore, by controlling the phosphorylation state of HPr, HPrK/P is a sensor enzyme that plays a major role in the regulation of carbon metabolism and sugar transport: it mediates carbon catabolite repression (CCR), and regulates PTS-catalyzed carbohydrate uptake and inducer exclusion. The protein is HPr kinase/phosphorylase (hprK) of Streptococcus pyogenes serotype M3 (strain ATCC BAA-595 / MGAS315).